The following is a 517-amino-acid chain: Beta-glucosidase 17 (517 aa).

An N-terminal signal peptide occupies residues 1-23 (MAIKSIFIIIIISIITSISELYA). Residues Gln-54, His-158, and 203-204 (NE) each bind a beta-D-glucoside. The Proton donor role is filled by Glu-204. A disulfide bond links Cys-223 and Cys-230. An N-linked (GlcNAc...) asparagine glycan is attached at Asn-229. Tyr-346 provides a ligand contact to a beta-D-glucoside. 2 N-linked (GlcNAc...) asparagine glycosylation sites follow: Asn-361 and Asn-371. Residues Glu-417, Trp-466, 473–474 (EW), and Tyr-482 each bind a beta-D-glucoside. Glu-417 serves as the catalytic Nucleophile. N-linked (GlcNAc...) asparagine glycosylation occurs at Asn-510.

The protein belongs to the glycosyl hydrolase 1 family.

The catalysed reaction is Hydrolysis of terminal, non-reducing beta-D-glucosyl residues with release of beta-D-glucose.. The sequence is that of Beta-glucosidase 17 from Arabidopsis thaliana (Mouse-ear cress).